Reading from the N-terminus, the 110-residue chain is NADH-quinone oxidoreductase subunit K (110 aa).

The next 3 helical transmembrane spans lie at 13 to 33 (LNHY…GLFM), 41 to 61 (ILMS…AFSV), and 73 to 93 (IIIL…LLIY).

It belongs to the complex I subunit 4L family. As to quaternary structure, NDH-1 is composed of 14 different subunits. Subunits NuoA, H, J, K, L, M, N constitute the membrane sector of the complex.

It is found in the cell inner membrane. It carries out the reaction a quinone + NADH + 5 H(+)(in) = a quinol + NAD(+) + 4 H(+)(out). NDH-1 shuttles electrons from NADH, via FMN and iron-sulfur (Fe-S) centers, to quinones in the respiratory chain. The immediate electron acceptor for the enzyme in this species is believed to be ubiquinone. Couples the redox reaction to proton translocation (for every two electrons transferred, four hydrogen ions are translocated across the cytoplasmic membrane), and thus conserves the redox energy in a proton gradient. The sequence is that of NADH-quinone oxidoreductase subunit K from Rickettsia prowazekii (strain Madrid E).